A 388-amino-acid polypeptide reads, in one-letter code: Putative nickel insertion protein (388 aa).

The protein belongs to the LarC family.

This Geobacter sulfurreducens (strain ATCC 51573 / DSM 12127 / PCA) protein is Putative nickel insertion protein.